Reading from the N-terminus, the 359-residue chain is S-adenosylmethionine:tRNA ribosyltransferase-isomerase (359 aa).

This sequence belongs to the QueA family. Monomer.

Its subcellular location is the cytoplasm. It carries out the reaction 7-aminomethyl-7-carbaguanosine(34) in tRNA + S-adenosyl-L-methionine = epoxyqueuosine(34) in tRNA + adenine + L-methionine + 2 H(+). Its pathway is tRNA modification; tRNA-queuosine biosynthesis. Its function is as follows. Transfers and isomerizes the ribose moiety from AdoMet to the 7-aminomethyl group of 7-deazaguanine (preQ1-tRNA) to give epoxyqueuosine (oQ-tRNA). The polypeptide is S-adenosylmethionine:tRNA ribosyltransferase-isomerase (Synechococcus elongatus (strain ATCC 33912 / PCC 7942 / FACHB-805) (Anacystis nidulans R2)).